The primary structure comprises 112 residues: Histone H2A, sperm (112 aa).

Gln91 carries the N5-methylglutamine modification. Residue Lys106 forms a Glycyl lysine isopeptide (Lys-Gly) (interchain with G-Cter in ubiquitin) linkage.

This sequence belongs to the histone H2A family. The nucleosome is a histone octamer containing two molecules each of H2A, H2B, H3 and H4 assembled in one H3-H4 heterotetramer and two H2A-H2B heterodimers. The octamer wraps approximately 147 bp of DNA. Post-translationally, monoubiquitination gives a specific tag for epigenetic transcriptional repression.

The protein resides in the nucleus. It is found in the chromosome. In terms of biological role, core component of nucleosome. Nucleosomes wrap and compact DNA into chromatin, limiting DNA accessibility to the cellular machineries which require DNA as a template. Histones thereby play a central role in transcription regulation, DNA repair, DNA replication and chromosomal stability. DNA accessibility is regulated via a complex set of post-translational modifications of histones, also called histone code, and nucleosome remodeling. The polypeptide is Histone H2A, sperm (Lytechinus pictus (Painted sea urchin)).